Reading from the N-terminus, the 295-residue chain is Probable porphobilinogen deaminase (295 aa).

S-(dipyrrolylmethanemethyl)cysteine is present on cysteine 234.

It belongs to the HMBS family. Dipyrromethane serves as cofactor.

It catalyses the reaction 4 porphobilinogen + H2O = hydroxymethylbilane + 4 NH4(+). Its pathway is porphyrin-containing compound metabolism; protoporphyrin-IX biosynthesis; coproporphyrinogen-III from 5-aminolevulinate: step 2/4. Tetrapolymerization of the monopyrrole PBG into the hydroxymethylbilane pre-uroporphyrinogen in several discrete steps. This Thermoplasma acidophilum (strain ATCC 25905 / DSM 1728 / JCM 9062 / NBRC 15155 / AMRC-C165) protein is Probable porphobilinogen deaminase (hemC).